Consider the following 337-residue polypeptide: MNTEATHDQNEALTTGARLRNAREQLGLSQQAVAERLCLKVSTVRDIEEDKAPADLASTFLRGYIRSYARLVHIPEEELLPGLEKQAPLRAAKVAPMQSFSLGKRRKKRDGWLMTFTWLVLFVVIGLSGAWWWQDHKAQQEEITTMADQSSAELSSNSEQGQSVPLNTSTTTDPATTSTPPASVDTTATNTQTPAVTAPAPAVDPQQNAVVSPSQANVDTAATPAPTATTTPDGAAPLPTDQAGVTTPAADPNALVMNFTADCWLEVTDATGKKLFSGMQRKDGNLNLTGQAPYKLKIGAPAAVQIQYQGKPVDLSRFIRTNQVARLTLNAEQSPAQ.

The Cytoplasmic segment spans residues 1–111 (MNTEATHDQN…LGKRRKKRDG (111 aa)). Positions 19-71 (LRNAREQLGLSQQAVAERLCLKVSTVRDIEEDKAPADLASTFLRGYIRSYARL) constitute an HTH cro/C1-type domain. A DNA-binding region (H-T-H motif) is located at residues 30 to 49 (QQAVAERLCLKVSTVRDIEE). The chain crosses the membrane as a helical; Signal-anchor for type II membrane protein span at residues 112 to 132 (WLMTFTWLVLFVVIGLSGAWW). The Periplasmic portion of the chain corresponds to 133-337 (WQDHKAQQEE…TLNAEQSPAQ (205 aa)). Positions 145 to 167 (TMADQSSAELSSNSEQGQSVPLN) are enriched in polar residues. The tract at residues 145-237 (TMADQSSAEL…ATTTPDGAAP (93 aa)) is disordered. The segment covering 168–207 (TSTTTDPATTSTPPASVDTTATNTQTPAVTAPAPAVDPQQ) has biased composition (low complexity). A compositionally biased stretch (polar residues) spans 208–218 (NAVVSPSQANV). Low complexity predominate over residues 219-237 (DTAATPAPTATTTPDGAAP).

This sequence belongs to the RodZ family.

The protein resides in the cell inner membrane. In terms of biological role, cytoskeletal protein that is involved in cell-shape control through regulation of the length of the long axis. This Escherichia coli (strain 55989 / EAEC) protein is Cytoskeleton protein RodZ.